Consider the following 200-residue polypeptide: Large ribosomal subunit protein uL29 (200 aa).

A large ribosomal subunit protein uL29 region spans residues 1-107 (MTIAKELKQK…KQETKKAEVK (107 aa)). A disordered region spans residues 92–200 (STKPESKQET…KMIKTKEKKQ (109 aa)). Residues 93 to 179 (TKPESKQETK…QEVKKVEAKK (87 aa)) show a composition bias toward basic and acidic residues. The unknown stretch occupies residues 108–200 (PKVESKPESK…KMIKTKEKKQ (93 aa)). Basic residues predominate over residues 186 to 200 (KPVKAKMIKTKEKKQ).

The protein belongs to the universal ribosomal protein uL29 family.

The protein is Large ribosomal subunit protein uL29 of Mycoplasma genitalium (strain ATCC 33530 / DSM 19775 / NCTC 10195 / G37) (Mycoplasmoides genitalium).